A 91-amino-acid chain; its full sequence is Acylphosphatase (91 aa).

The region spanning 3–91 (CLRAIVKGKV…ANYSDFRIKH (89 aa)) is the Acylphosphatase-like domain. Active-site residues include Arg-18 and Asn-36.

This sequence belongs to the acylphosphatase family.

It carries out the reaction an acyl phosphate + H2O = a carboxylate + phosphate + H(+). This chain is Acylphosphatase (acyP), found in Dehalococcoides mccartyi (strain CBDB1).